Reading from the N-terminus, the 148-residue chain is Nucleoside diphosphate kinase (148 aa).

K9, F57, R85, T91, R102, and N112 together coordinate ATP. T91 is modified (phosphothreonine). The Pros-phosphohistidine intermediate role is filled by H115. S122 carries the post-translational modification Phosphoserine.

The protein belongs to the NDK family. Homotetramer. Mg(2+) serves as cofactor.

It localises to the cytoplasm. The catalysed reaction is a 2'-deoxyribonucleoside 5'-diphosphate + ATP = a 2'-deoxyribonucleoside 5'-triphosphate + ADP. It carries out the reaction a ribonucleoside 5'-diphosphate + ATP = a ribonucleoside 5'-triphosphate + ADP. Major role in the synthesis of nucleoside triphosphates other than ATP. The ATP gamma phosphate is transferred to the NDP beta phosphate via a ping-pong mechanism, using a phosphorylated active-site intermediate. This is Nucleoside diphosphate kinase from Bacillus licheniformis (strain ATCC 14580 / DSM 13 / JCM 2505 / CCUG 7422 / NBRC 12200 / NCIMB 9375 / NCTC 10341 / NRRL NRS-1264 / Gibson 46).